We begin with the raw amino-acid sequence, 164 residues long: Nitric oxide synthase, inducible (164 aa).

Phenylalanine 3 contributes to the (6R)-L-erythro-5,6,7,8-tetrahydrobiopterin binding site. Tyrosine 18 provides a ligand contact to heme b. Positions 42-62 are calmodulin-binding; it reads FKGLIRAVLFSQTLIKSALAK. Positions 66-164 constitute a Flavodoxin-like domain; sequence CTVLYATETG…SRMYPHFCAF (99 aa). FMN-binding residues include threonine 72, glutamate 73, threonine 74, lysine 76, serine 77, serine 118, threonine 119, serine 155, and cysteine 162.

Belongs to the NOS family. As to quaternary structure, homodimer. Requires heme b as cofactor. FAD is required as a cofactor. The cofactor is FMN. (6R)-L-erythro-5,6,7,8-tetrahydrobiopterin serves as cofactor.

The protein localises to the cytoplasm. It is found in the cytosol. It carries out the reaction 2 L-arginine + 3 NADPH + 4 O2 + H(+) = 2 L-citrulline + 2 nitric oxide + 3 NADP(+) + 4 H2O. Its activity is regulated as follows. Not stimulated by calcium/calmodulin. Functionally, produces nitric oxide (NO) which is a messenger molecule with diverse functions throughout the body. In macrophages, NO mediates tumoricidal and bactericidal actions. Also has nitrosylase activity and mediates cysteine S-nitrosylation of cytoplasmic target proteins such COX2. The sequence is that of Nitric oxide synthase, inducible (nos2) from Carassius auratus (Goldfish).